Consider the following 447-residue polypeptide: Beclin-2 (447 aa).

A coiled-coil region spans residues 169-228 (EALHAELCAELSSLEQEEARLTQELEDLDGHHARVAAELRAAQAESKELYKQHEQHRVEY). The tract at residues 186-256 (EARLTQELED…NQLTYALSQQ (71 aa)) is required for homodimer formation.

This sequence belongs to the beclin family. Homodimer (via coiled-coil domain). Interacts (via coiled-coil domain) with ATG14 (via coiled-coil domain); this interaction is tighter than BECN2 self-association. Interacts with AMBRA1, UVRAG and PIK3C3/VPS34; these interactions are not disrupted by starvation. Does not interact with RUBCN. Interacts (via N-terminus) with GPRASP1/GASP1; the interaction is direct. As to expression, expressed in brain, skeletal muscle, placenta, thymus and uterus. Expressed at a lower level in liver, testis, stomach, and 17-day-old embryos.

It is found in the cytoplasm. Its function is as follows. Involved in 2 distinct lysosomal degradation pathways: acts as a regulator of autophagy and as a regulator of G-protein coupled receptors turnover. Regulates degradation in lysosomes of a variety of G-protein coupled receptors via its interaction with GPRASP1/GASP1. The sequence is that of Beclin-2 from Mus musculus (Mouse).